Consider the following 248-residue polypeptide: Ribonuclease PH (248 aa).

Phosphate is bound by residues Arg86 and 124–126 (GTR).

It belongs to the RNase PH family. Homohexameric ring arranged as a trimer of dimers.

The enzyme catalyses tRNA(n+1) + phosphate = tRNA(n) + a ribonucleoside 5'-diphosphate. Phosphorolytic 3'-5' exoribonuclease that plays an important role in tRNA 3'-end maturation. Removes nucleotide residues following the 3'-CCA terminus of tRNAs; can also add nucleotides to the ends of RNA molecules by using nucleoside diphosphates as substrates, but this may not be physiologically important. Probably plays a role in initiation of 16S rRNA degradation (leading to ribosome degradation) during starvation. The protein is Ribonuclease PH of Clostridium perfringens (strain ATCC 13124 / DSM 756 / JCM 1290 / NCIMB 6125 / NCTC 8237 / Type A).